The sequence spans 89 residues: Cell division protein ZapA (89 aa).

It belongs to the ZapA family. Type 2 subfamily. Homodimer. Interacts with FtsZ.

The protein resides in the cytoplasm. Functionally, activator of cell division through the inhibition of FtsZ GTPase activity, therefore promoting FtsZ assembly into bundles of protofilaments necessary for the formation of the division Z ring. It is recruited early at mid-cell but it is not essential for cell division. The polypeptide is Cell division protein ZapA (Bacillus mycoides (strain KBAB4) (Bacillus weihenstephanensis)).